Here is a 493-residue protein sequence, read N- to C-terminus: Cytoplasmic tRNA 2-thiolation protein 2 (493 aa).

The residue at position 489 (Ser-489) is a Phosphoserine.

The protein belongs to the CTU2/NCS2 family. As to quaternary structure, interacts with NCS6 and URM1. May act by forming a heterodimer with NCS6.

It localises to the cytoplasm. It functions in the pathway tRNA modification; 5-methoxycarbonylmethyl-2-thiouridine-tRNA biosynthesis. In terms of biological role, plays a central role in 2-thiolation of mcm(5)S(2)U at tRNA wobble positions of tRNA(Lys), tRNA(Glu) and tRNA(Gln). May act by forming a heterodimer with NCS6 that ligates sulfur from thiocarboxylated URM1 onto the uridine of tRNAs at wobble position. Prior mcm(5) tRNA modification by the elongator complex is required for 2-thiolation. May also be involved in protein urmylation and in invasive and pseudohyphal growth. Inhibits replication of Brome mosaic virus. This Saccharomyces cerevisiae (strain ATCC 204508 / S288c) (Baker's yeast) protein is Cytoplasmic tRNA 2-thiolation protein 2.